A 557-amino-acid polypeptide reads, in one-letter code: Polypyrimidine tract-binding protein 1 (557 aa).

An N-acetylmethionine modification is found at Met1. Ser16 carries the post-translational modification Phosphoserine. RRM domains follow at residues 59–143 (RVIH…SSPN), 184–260 (LRII…FSKL), and 363–437 (SVLL…LSKH). Lys65 is covalently cross-linked (Glycyl lysine isopeptide (Lys-Gly) (interchain with G-Cter in SUMO2)). Tyr127 is modified (phosphotyrosine). Thr138 carries the phosphothreonine modification. A Phosphoserine modification is found at Ser141. A Glycyl lysine isopeptide (Lys-Gly) (interchain with G-Cter in SUMO2) cross-link involves residue Lys218. The disordered stretch occupies residues 437-460 (HQSVQLPREGQEDQGLTKDYGNSP). The residue at position 459 (Ser459) is a Phosphoserine. Positions 480–555 (ATLHLSNIPP…HHLRVSFSKS (76 aa)) constitute an RRM 4 domain.

In terms of assembly, monomer. Part of a ternary complex containing KHSRP, PTBP1, PTBP2 and HNRPH1. Interacts with RAVER1 and SFPQ.

The protein resides in the nucleus. Plays a role in pre-mRNA splicing and in the regulation of alternative splicing events. Activates exon skipping of its own pre-mRNA during muscle cell differentiation. Binds to the polypyrimidine tract of introns. May promote RNA looping when bound to two separate polypyrimidine tracts in the same pre-mRNA. May promote the binding of U2 snRNP to pre-mRNA. Cooperates with RAVER1 to modulate switching between mutually exclusive exons during maturation of the TPM1 pre-mRNA. Represses the splicing of MAPT/Tau exon 10. Binds to polypyrimidine-rich controlling element (PCE) of CFTR and promotes exon skipping of CFTR exon 9, thereby antagonizing TIA1 and its role in exon inclusion of CFTR exon 9. Plays a role in the splicing of pyruvate kinase PKM by binding repressively to a polypyrimidine tract flanking PKM exon 9, inhibiting exon 9 inclusion and resulting in exon 10 inclusion and production of the PKM M2 isoform. In Bos taurus (Bovine), this protein is Polypyrimidine tract-binding protein 1 (PTBP1).